Here is a 515-residue protein sequence, read N- to C-terminus: 2-isopropylmalate synthase (515 aa).

One can recognise a Pyruvate carboxyltransferase domain in the interval 4–266 (IKFFDTTLRD…ETRLNLQEIK (263 aa)). Positions 13, 201, 203, and 237 each coordinate Mn(2+). Residues 391 to 515 (QLSSIQVQYG…RGENEKVATP (125 aa)) form a regulatory domain region.

This sequence belongs to the alpha-IPM synthase/homocitrate synthase family. LeuA type 1 subfamily. Homodimer. The cofactor is Mn(2+).

The protein localises to the cytoplasm. The catalysed reaction is 3-methyl-2-oxobutanoate + acetyl-CoA + H2O = (2S)-2-isopropylmalate + CoA + H(+). It functions in the pathway amino-acid biosynthesis; L-leucine biosynthesis; L-leucine from 3-methyl-2-oxobutanoate: step 1/4. Catalyzes the condensation of the acetyl group of acetyl-CoA with 3-methyl-2-oxobutanoate (2-ketoisovalerate) to form 3-carboxy-3-hydroxy-4-methylpentanoate (2-isopropylmalate). The polypeptide is 2-isopropylmalate synthase (Geobacillus kaustophilus (strain HTA426)).